The primary structure comprises 313 residues: tRNA uridine(34) hydroxylase (313 aa).

Positions 124-218 (SDPEVLLIDT…YLEEVPQQES (95 aa)) constitute a Rhodanese domain. The active-site Cysteine persulfide intermediate is the Cys178.

This sequence belongs to the TrhO family.

The catalysed reaction is uridine(34) in tRNA + AH2 + O2 = 5-hydroxyuridine(34) in tRNA + A + H2O. Catalyzes oxygen-dependent 5-hydroxyuridine (ho5U) modification at position 34 in tRNAs. This Pseudomonas fluorescens (strain ATCC BAA-477 / NRRL B-23932 / Pf-5) protein is tRNA uridine(34) hydroxylase.